The primary structure comprises 92 residues: Elongation factor 1-beta (92 aa).

It belongs to the EF-1-beta/EF-1-delta family.

Functionally, promotes the exchange of GDP for GTP in EF-1-alpha/GDP, thus allowing the regeneration of EF-1-alpha/GTP that could then be used to form the ternary complex EF-1-alpha/GTP/AAtRNA. In Pyrobaculum neutrophilum (strain DSM 2338 / JCM 9278 / NBRC 100436 / V24Sta) (Thermoproteus neutrophilus), this protein is Elongation factor 1-beta.